Here is a 92-residue protein sequence, read N- to C-terminus: LYR motif-containing protein 4A (92 aa).

It belongs to the complex I LYR family.

The chain is LYR motif-containing protein 4A (lyrm4a) from Salmo salar (Atlantic salmon).